A 477-amino-acid polypeptide reads, in one-letter code: Protoporphyrinogen oxidase (477 aa).

FAD-binding positions include 9-14 (GGGISG), W42, 57-60 (GPRG), V257, A449, and 454-456 (VAV).

Belongs to the protoporphyrinogen/coproporphyrinogen oxidase family. Protoporphyrinogen oxidase subfamily. In terms of assembly, monomer. Homodimer. Requires FAD as cofactor.

The protein resides in the mitochondrion inner membrane. It carries out the reaction protoporphyrinogen IX + 3 O2 = protoporphyrin IX + 3 H2O2. The protein operates within porphyrin-containing compound metabolism; protoporphyrin-IX biosynthesis; protoporphyrin-IX from protoporphyrinogen-IX: step 1/1. In terms of biological role, catalyzes the 6-electron oxidation of protoporphyrinogen-IX to form protoporphyrin-IX. This is Protoporphyrinogen oxidase (PPOX) from Macaca fascicularis (Crab-eating macaque).